The primary structure comprises 735 residues: NAD(P)H-quinone oxidoreductase subunit 5, chloroplastic (735 aa).

The next 16 membrane-spanning stretches (helical) occupy residues 9 to 29 (WIIP…LLLF), 40 to 60 (WAFP…DLSI), 89 to 109 (IDSL…FVLI), 125 to 145 (FAYM…CNLI), 147 to 167 (IYIF…FWFT), 184 to 204 (IGDF…GSFE), 219 to 239 (NEVH…GAVA), 258 to 278 (TPIS…FLVA), 280 to 300 (LLPL…IGII), 327 to 347 (LGYM…FHLI), 354 to 374 (ALLF…VGYS), 396 to 416 (IAFL…CFWS), 425 to 445 (WLYS…TAFY), 540 to 560 (LFPM…AIPF), 600 to 620 (FSVS…KPFY), and 714 to 734 (FYLL…YFIL).

Belongs to the complex I subunit 5 family. As to quaternary structure, NDH is composed of at least 16 different subunits, 5 of which are encoded in the nucleus.

Its subcellular location is the plastid. It is found in the chloroplast thylakoid membrane. It carries out the reaction a plastoquinone + NADH + (n+1) H(+)(in) = a plastoquinol + NAD(+) + n H(+)(out). It catalyses the reaction a plastoquinone + NADPH + (n+1) H(+)(in) = a plastoquinol + NADP(+) + n H(+)(out). Its function is as follows. NDH shuttles electrons from NAD(P)H:plastoquinone, via FMN and iron-sulfur (Fe-S) centers, to quinones in the photosynthetic chain and possibly in a chloroplast respiratory chain. The immediate electron acceptor for the enzyme in this species is believed to be plastoquinone. Couples the redox reaction to proton translocation, and thus conserves the redox energy in a proton gradient. This Gossypium hirsutum (Upland cotton) protein is NAD(P)H-quinone oxidoreductase subunit 5, chloroplastic (ndhF).